The sequence spans 621 residues: Type 2 DNA topoisomerase 6 subunit B (621 aa).

ATP-binding positions include N48, D80, S101–R102, G111–S118, and K435.

This sequence belongs to the TOP6B family. As to quaternary structure, homodimer. Heterotetramer of two Top6A and two Top6B chains.

It carries out the reaction ATP-dependent breakage, passage and rejoining of double-stranded DNA.. Relaxes both positive and negative superturns and exhibits a strong decatenase activity. This is Type 2 DNA topoisomerase 6 subunit B from Methanosarcina barkeri (strain Fusaro / DSM 804).